The sequence spans 193 residues: Guanylate kinase (193 aa).

The region spanning 12 to 191 (DLLTIVAGPT…AANELWLAMN (180 aa)) is the Guanylate kinase-like domain. 19-26 (GPTAVGKG) provides a ligand contact to ATP.

Belongs to the guanylate kinase family.

Its subcellular location is the cytoplasm. The enzyme catalyses GMP + ATP = GDP + ADP. In terms of biological role, essential for recycling GMP and indirectly, cGMP. This chain is Guanylate kinase, found in Tropheryma whipplei (strain TW08/27) (Whipple's bacillus).